Consider the following 298-residue polypeptide: Calcium-binding protein 1 (298 aa).

The segment covering 1 to 10 (MSSHIAKSES) has biased composition (basic and acidic residues). A disordered region spans residues 1-131 (MSSHIAKSES…APAGTPEADP (131 aa)). The N-myristoyl glycine moiety is linked to residue serine 2. The S-palmitoyl cysteine moiety is linked to residue histidine 4. Low complexity predominate over residues 11 to 25 (KTSLLKAAAASGGSR). EF-hand domains follow at residues 153-188 (EEIE…MGYM), 207-224 (GHVD…KLLA), 230-265 (IGVK…LLGH), and 267-298 (VGHR…MMSR). Ca(2+) contacts are provided by aspartate 166, aspartate 168, aspartate 170, tyrosine 172, and aspartate 177. Residues aspartate 243, asparagine 245, aspartate 247, and glutamate 249 each contribute to the Ca(2+) site. Position 251 is a phosphoserine (serine 251). Ca(2+) is bound by residues glutamate 254, aspartate 280, asparagine 282, aspartate 284, arginine 286, and glutamate 291.

Interacts with ITPR1, ITPR2 and ITPR3. The strength of this interaction inversely correlates with calcium concentration. Interacts with CACNA1A (via C-terminal CDB motif) in the pre- and postsynaptic membranes. Interacts with CACNA1C. Interacts with CACNA1D. Interacts (via EF-hands 1 and 2) at microtubules with MAP1LC3B. Interacts (via EF-hands 1 and 2) with NSMF (via the central NLS-containing motif region), the interaction occurs in a calcium dependent manner after synaptic NMDA receptor stimulation and prevents nuclear import of NSMF. Interacts with MYO1C and TRPC5. Interacts with SPACA9. Phosphorylated. The phosphorylation regulates the activity. Somatodendritic compartment of neurons. Restricted expression in retina to a subpopulation of amacrine, bipolar, and ganglion cells. According to PubMed:11906216, expression is heterogeneous within brain regions and their major cell types and does not match with those of marker proteins for characterized neuronal subpopulations. Isoform 2: Minor isoform expressed in the brain, in the granule cell layer of the cerebellum, at low level. Not developmentally regulated. Isoform 3: Minor isoform expressed in the brain, in the granule cell layer. of the cerebellum, at low level. Not developmentally regulated.

It is found in the cytoplasm. The protein localises to the cytoskeleton. Functionally, modulates calcium-dependent activity of inositol 1,4,5-triphosphate receptors (ITPRs). Inhibits agonist-induced intracellular calcium signaling. Enhances inactivation and does not support calcium-dependent facilitation of voltage-dependent P/Q-type calcium channels. Causes calcium-dependent facilitation and inhibits inactivation of L-type calcium channels by binding to the same sites as calmodulin in the C-terminal domain of CACNA1C, but has an opposite effect on channel function. Suppresses the calcium-dependent inactivation of CACNA1D. Inhibits TRPC5 channels. Prevents NMDA receptor-induced cellular degeneration. Required for the normal transfer of light signals through the retina. The sequence is that of Calcium-binding protein 1 (Cabp1) from Rattus norvegicus (Rat).